Consider the following 204-residue polypeptide: Acyl-homoserine-lactone synthase (204 aa).

It belongs to the autoinducer synthase family.

It carries out the reaction a fatty acyl-[ACP] + S-adenosyl-L-methionine = an N-acyl-L-homoserine lactone + S-methyl-5'-thioadenosine + holo-[ACP] + H(+). Its function is as follows. Required for the synthesis of acyl-HSL autoinducers that bind to SolR. This is Acyl-homoserine-lactone synthase (solI) from Ralstonia nicotianae (strain ATCC BAA-1114 / GMI1000) (Ralstonia solanacearum).